A 416-amino-acid polypeptide reads, in one-letter code: Kelch repeat-containing protein At1g19460 (416 aa).

The segment covering 1-11 (MANISEISGDS) has biased composition (polar residues). The disordered stretch occupies residues 1 to 55 (MANISEISGDSNDGGDPNKKPEEQVLRRSRRIATRNENQNKKPKEEEEKDNRSVS). Composition is skewed to basic and acidic residues over residues 16-26 (DPNKKPEEQVL) and 38-52 (NQNK…KDNR). Kelch repeat units lie at residues 156–202 (EMYV…VFDG), 203–250 (KIYV…FAHA), 255–293 (KLYI…PCTM), and 294–344 (QCVI…SDGS).

In Arabidopsis thaliana (Mouse-ear cress), this protein is Kelch repeat-containing protein At1g19460.